The sequence spans 404 residues: S-adenosylmethionine synthase (404 aa).

Histidine 17 is an ATP binding site. A Mg(2+)-binding site is contributed by aspartate 19. Glutamate 45 is a K(+) binding site. The L-methionine site is built by glutamate 58 and glutamine 101. The tract at residues 101–111 is flexible loop; that stretch reads QSPDINRGVDR. ATP contacts are provided by residues 172-174, 246-247, aspartate 255, 261-262, alanine 278, and lysine 282; these read DAK, RF, and RK. Aspartate 255 is a binding site for L-methionine. Lysine 286 provides a ligand contact to L-methionine.

It belongs to the AdoMet synthase family. Homotetramer; dimer of dimers. Requires Mg(2+) as cofactor. K(+) is required as a cofactor.

The protein localises to the cytoplasm. The catalysed reaction is L-methionine + ATP + H2O = S-adenosyl-L-methionine + phosphate + diphosphate. Its pathway is amino-acid biosynthesis; S-adenosyl-L-methionine biosynthesis; S-adenosyl-L-methionine from L-methionine: step 1/1. Functionally, catalyzes the formation of S-adenosylmethionine (AdoMet) from methionine and ATP. The overall synthetic reaction is composed of two sequential steps, AdoMet formation and the subsequent tripolyphosphate hydrolysis which occurs prior to release of AdoMet from the enzyme. This is S-adenosylmethionine synthase from Chlorobaculum tepidum (strain ATCC 49652 / DSM 12025 / NBRC 103806 / TLS) (Chlorobium tepidum).